A 307-amino-acid chain; its full sequence is Putative oxidoreductase YceM (307 aa).

This sequence belongs to the Gfo/Idh/MocA family.

This chain is Putative oxidoreductase YceM (yceM), found in Escherichia coli (strain K12).